The following is a 217-amino-acid chain: Large ribosomal subunit protein uL3 (217 aa).

A disordered region spans residues 129 to 161 (SRGPMSHGSKNHRAPGSTGAGTTPGRIYPGKRM). Residues 142–153 (APGSTGAGTTPG) are compositionally biased toward low complexity.

Belongs to the universal ribosomal protein uL3 family. Part of the 50S ribosomal subunit. Forms a cluster with proteins L14 and L19.

Functionally, one of the primary rRNA binding proteins, it binds directly near the 3'-end of the 23S rRNA, where it nucleates assembly of the 50S subunit. In Prochlorococcus marinus subsp. pastoris (strain CCMP1986 / NIES-2087 / MED4), this protein is Large ribosomal subunit protein uL3.